The chain runs to 1488 residues: WD repeat-containing protein 7 (1488 aa).

WD repeat units lie at residues 17–56 (APTH…EVNP), 62–104 (GHTA…CIEF), 156–199 (ISPD…SGLQ), 324–366 (VICP…DKQE), 404–443 (NEPL…IVQL), 462–507 (GHRN…MKHI), and 558–597 (RHLF…LDRC). Disordered stretches follow at residues 761–781 (EEED…PEYR) and 911–947 (GDHM…QGQI). Residues 768–781 (VMRQRREESDPEYR) are compositionally biased toward basic and acidic residues. Position 935 is a phosphoserine (serine 935). Residues 937–947 (PASSNIVQGQI) show a composition bias toward polar residues. WD repeat units follow at residues 1349–1388 (PAIC…CQTI) and 1390–1430 (GHKG…LGSI). A Phosphoserine modification is found at serine 1454.

This chain is WD repeat-containing protein 7 (Wdr7), found in Rattus norvegicus (Rat).